The chain runs to 149 residues: MADQLTEEQIAEFKEAFSLFDKDGDGTITTKELGTVMRSLGQNPTEAELQDMINEVDADGNGTIDFPEFLTMMARKMKDTDSEEEIREAFRVFDKDGNGFISAAELRHVMTNLGEKLTDEEVDEMIREADIDGDGQVNYEEFVTMMMSK.

An N-acetylalanine modification is found at Ala-2. EF-hand domains lie at 8-43 (EQIA…LGQN), 44-79 (PTEA…KMKD), 81-116 (DSEE…LGEK), and 117-149 (LTDE…MMSK). Ca(2+) contacts are provided by Asp-21, Asp-23, Asp-25, Thr-27, Glu-32, Asp-57, Asp-59, Asn-61, Thr-63, Glu-68, Asp-94, Asp-96, Asn-98, and Glu-105. An N6,N6,N6-trimethyllysine modification is found at Lys-116. Ca(2+)-binding residues include Asp-130, Asp-132, Asp-134, Gln-136, and Glu-141.

The protein belongs to the calmodulin family.

In terms of biological role, calmodulin mediates the control of a large number of enzymes, ion channels and other proteins by Ca(2+). Among the enzymes to be stimulated by the calmodulin-Ca(2+) complex are a number of protein kinases and phosphatases. This Lumbricus rubellus (Humus earthworm) protein is Calmodulin.